The chain runs to 476 residues: 3-isopropylmalate dehydratase large subunit (476 aa).

Residues Cys-353, Cys-413, and Cys-416 each coordinate [4Fe-4S] cluster.

The protein belongs to the aconitase/IPM isomerase family. LeuC type 1 subfamily. In terms of assembly, heterodimer of LeuC and LeuD. [4Fe-4S] cluster serves as cofactor.

The enzyme catalyses (2R,3S)-3-isopropylmalate = (2S)-2-isopropylmalate. It participates in amino-acid biosynthesis; L-leucine biosynthesis; L-leucine from 3-methyl-2-oxobutanoate: step 2/4. In terms of biological role, catalyzes the isomerization between 2-isopropylmalate and 3-isopropylmalate, via the formation of 2-isopropylmaleate. In Photobacterium profundum (strain SS9), this protein is 3-isopropylmalate dehydratase large subunit.